A 217-amino-acid polypeptide reads, in one-letter code: Cytidylate kinase (217 aa).

11–19 (GPAGAGKST) contacts ATP.

Belongs to the cytidylate kinase family. Type 1 subfamily.

The protein localises to the cytoplasm. It catalyses the reaction CMP + ATP = CDP + ADP. It carries out the reaction dCMP + ATP = dCDP + ADP. The polypeptide is Cytidylate kinase (Clostridium perfringens (strain ATCC 13124 / DSM 756 / JCM 1290 / NCIMB 6125 / NCTC 8237 / Type A)).